A 274-amino-acid polypeptide reads, in one-letter code: Nitrogenase iron protein (274 aa).

An ATP-binding site is contributed by 8–15; it reads GKGGIGKS. Cys-94 provides a ligand contact to [4Fe-4S] cluster. Arg-97 is modified (ADP-ribosylarginine; by dinitrogenase reductase ADP-ribosyltransferase). Cys-131 contributes to the [4Fe-4S] cluster binding site.

Belongs to the NifH/BchL/ChlL family. Homodimer. The cofactor is [4Fe-4S] cluster. In terms of processing, the reversible ADP-ribosylation of Arg-97 inactivates the nitrogenase reductase and regulates nitrogenase activity.

It carries out the reaction N2 + 8 reduced [2Fe-2S]-[ferredoxin] + 16 ATP + 16 H2O = H2 + 8 oxidized [2Fe-2S]-[ferredoxin] + 2 NH4(+) + 16 ADP + 16 phosphate + 6 H(+). Functionally, the key enzymatic reactions in nitrogen fixation are catalyzed by the nitrogenase complex, which has 2 components: the iron protein and the molybdenum-iron protein. The protein is Nitrogenase iron protein of Chlorobium luteolum (strain DSM 273 / BCRC 81028 / 2530) (Pelodictyon luteolum).